A 1210-amino-acid polypeptide reads, in one-letter code: MAIAEVIGFFTLVCVIWYWVYKKHKNLQLKICRSSIESSSSSSSLSSPPSLSSPISRTWTHQVFPSFRGEDVRKGFLSHIQKEFKSKGIVPFIDDEMKRGESIGPGLFQAIRESKIAIVLLSKNYASSSWCLNELVEIMNCREEIGQTVMTVFYQVDPSDVRKQTGDFGKAFKKTCVGKTQEVKQRWSRALMDVANILGQDSRKWDKEADMIVKVAKDVSDVLSYTPSRDFDDYVGIRPHITRINSLLCLESSDVRMIGILGPPGIGKTTIARVLYDQISEKFQFSAFIENIRLSYWKGWHDEGNLDFPVEIMTGDRQRKLNLQRRLLSELFNQKDIQVRHLGAVQERLRDHKVLVILDGVDQLEQLTALAKETQWFGYGSRIIITTQDQRLLRAHEINHVYKVDLPATDEALQIFCLYAFGQKFPYDGFKKLAREFTALAGELPLGLRVLGSYLRGMSLEEWKNALPRLRTSLDGEIEKTLRFAYNVLSDKDKSLFLHIACLFNGCQVNHVKQWLANSSLDVNHGFEVLSNKSLISTDMGLVRMHSLLQQLGVDIVRKQSIGEPEKRQFLVDVNEISDVITDNTGTGTILGIMLHVSKIEDVLVIEETVFDRMTNLQFLILDECLRDKLNLPLGLNCLPRKIRLLRWDYCPLSIWPSKFSAKFLVELIMRANKFEKLWEGIQPLKNLKRMELGDARNLKEIPDLSNATNLESLLLSFCTSLLEIPSSIRGTTNLKELDLGGCASLVKLSSCICNATSLEELNLSACSNLVELPCALPGDSNMRSLSKLLLNGSSRLKTFPEISTNIQELNLSGTAIEEVPSSIRLWSRLDKLDMSRCKNLKMFPPVPDGISVLNLSETEIEDIPPWVENLSQLRHFVMIRCKKLDNISLSRISKMEGVHCLQITRGDEDVSGDSIVNIRWYSNFPNQWTLQSDMLQICLPELVYTSPVSLHFISNEFKTIPDCIKNLSQLHQLSFYRCHKLVSLPQLSDCLSSLDAENCVSLETIDGSFHNPDIRLNFLNCNNLNQEARELIQKSVCKHALLPSGEVPAYFIHRAIGDSVTIHLKERHLPLYLIFKASLVLFNDDEINYDYDDDDDDDYDEEVIVYGDYDSYPHSDDYTKQETMRLSCRVEGKQNGLTIQYGSSVHLLPTPHRYTEHVYIFEASFSLGECNSPEAESELVFDFKVHDYFWAIKECGLRLLELPHAHGDD.

The TIR domain occupies 59–223 (WTHQVFPSFR…KVAKDVSDVL (165 aa)). E134 is a catalytic residue. The 271-residue stretch at 241-511 (ITRINSLLCL…CLFNGCQVNH (271 aa)) folds into the NB-ARC domain. 9 LRR repeats span residues 662-685 (AKFLVELIMRANKFEKLWEGIQPL), 686-709 (KNLKRMELGDARNLKEIPDLSNAT), 711-732 (LESLLLSFCTSLLEIPSSIRGT), 756-780 (ATSLEELNLSACSNLVELPCALPGD), 783-804 (MRSLSKLLLNGSSRLKTFPEIS), 805-828 (TNIQELNLSGTAIEEVPSSIRLWS), 830-848 (LDKLDMSRCKNLKMFPPVP), 849-873 (DGISVLNLSETEIEDIPPWVENLSQ), and 940-970 (LPELVYTSPVSLHFISNEFKTIPDCIKNLSQ).

This sequence belongs to the disease resistance NB-LRR family. As to quaternary structure, interacts with DSC1.

The catalysed reaction is NAD(+) + H2O = ADP-D-ribose + nicotinamide + H(+). In terms of biological role, TIR-NB-LRR receptor-like protein involved in plant defense. Acts as a trigger of hypersensitive response (HR). Functions as a guard of CAMTA3, a negative regulator of immunity, during pathogen infection. The protein is Disease resistance-like protein DSC2 of Arabidopsis thaliana (Mouse-ear cress).